We begin with the raw amino-acid sequence, 553 residues long: Cytokine-like nuclear factor N-PAC (553 aa).

One can recognise a PWWP domain in the interval 8–66; the sequence is LGDLVWGKLGRYPPWPGKIVNPPKDLKKPRGKKCFFVKFFGTEDHAWIKVEQLKPYHAH. Composition is skewed to basic and acidic residues over residues 92 to 145 and 162 to 182; these read RAKG…EGKK and RAQEQSPRKRGRPPKDEKDLT. The segment at 92–188 is disordered; the sequence is RAKGKDQTSS…KDLTIPESST (97 aa). Residue S130 is modified to Phosphoserine. K135 is covalently cross-linked (Glycyl lysine isopeptide (Lys-Gly) (interchain with G-Cter in SUMO2)). S167 carries the post-translational modification Phosphoserine. A DNA-binding region (a.T hook) is located at residues 168-180; it reads PRKRGRPPKDEKD. Glycyl lysine isopeptide (Lys-Gly) (interchain with G-Cter in SUMO2) cross-links involve residues K176, K179, K201, and K211. The segment at 214 to 217 is interaction with histone H3; it reads DPHF. The tract at residues 216–225 is interaction with KDM1B; the sequence is HFHHFLLSQT. Glycyl lysine isopeptide (Lys-Gly) (interchain with G-Cter in SUMO2) cross-links involve residues K227, K237, K240, and K269. A dehydrogenase domain region spans residues 261-553; that stretch reads GSITPTDKKI…MSAVYRAYIH (293 aa). Residue 271–285 coordinates NAD(+); the sequence is GFLGLGLMGSGIVSN. A Glycyl lysine isopeptide (Lys-Gly) (interchain with G-Cter in SUMO2) cross-link involves residue K302. NAD(+) is bound by residues T362 and K505. S540 bears the Phosphoserine mark.

This sequence belongs to the HIBADH-related family. NP60 subfamily. Homotetramere. Interacts with MAPK14. Interacts with KDM1B at nucleosomes; this interaction stimulates H3K4me1 and H3K4me2 demethylation. Binds to mononucleosomes. Interacts with GATA4; the interaction is required for a synergistic activation of GATA4 target genes transcription.

It localises to the nucleus. The protein resides in the chromosome. In terms of biological role, cytokine-like nuclear factor with chromatin gene reader activity involved in chromatin modification and regulation of gene expression. Acts as a nucleosome-destabilizing factor that is recruited to genes during transcriptional activation. Recognizes and binds histone H3 without a preference for specific epigenetic markers and also binds DNA. Interacts with KDM1B and promotes its histone demethylase activity by facilitating the capture of H3 tails, they form a multifunctional enzyme complex that modifies transcribed chromatin and facilitates Pol II transcription through nucleosomes. Stimulates the acetylation of 'Lys-56' of nucleosomal histone H3 (H3K56ac) by EP300. With GATA4, co-binds a defined set of heart development genes and coregulates their expression during cardiomyocyte differentiation. Regulates p38 MAP kinase activity by mediating stress activation of MAPK14/p38alpha and specifically regulating MAPK14 signaling. Indirectly promotes phosphorylation of MAPK14 and activation of ATF2. The phosphorylation of MAPK14 requires upstream activity of MAP2K4 and MAP2K6. The sequence is that of Cytokine-like nuclear factor N-PAC (GLYR1) from Pongo abelii (Sumatran orangutan).